A 323-amino-acid polypeptide reads, in one-letter code: RING-H2 finger protein ATL32 (323 aa).

Residues 1–28 (MMTRVECFNPHRWIILHVAIIIQSKANA) form the signal peptide. The chain crosses the membrane as a helical span at residues 47-67 (TTVFAVLVTLFFLTGLLSVYI). The segment at 124–166 (CAICLNELEDHETVRLLPICNHLFHIDCIDTWLYSHATCPVCR) adopts an RING-type; atypical zinc-finger fold. The interval 210 to 229 (SSEISGKFPRSNSTGHSMDR) is disordered.

Belongs to the RING-type zinc finger family. ATL subfamily.

Its subcellular location is the membrane. It catalyses the reaction S-ubiquitinyl-[E2 ubiquitin-conjugating enzyme]-L-cysteine + [acceptor protein]-L-lysine = [E2 ubiquitin-conjugating enzyme]-L-cysteine + N(6)-ubiquitinyl-[acceptor protein]-L-lysine.. It functions in the pathway protein modification; protein ubiquitination. This Arabidopsis thaliana (Mouse-ear cress) protein is RING-H2 finger protein ATL32 (ATL32).